A 175-amino-acid polypeptide reads, in one-letter code: Two-on-two hemoglobin-3 (175 aa).

Tyr-85 and His-98 together coordinate heme. Residues 153–175 (QNEKPKHKPQCACKHAANKPAEE) form a disordered region.

It belongs to the truncated hemoglobin family. Group II subfamily. In terms of assembly, homodimer when ferric. Interacts with RGLG3 and RGLG4. Heme is required as a cofactor. Expressed ubiquitously, with higher levels in root tissue than in shoot tissue.

Hemoglobin-like protein that exhibits an unusual concentration-independent binding of O(2) and CO. May promote shoot organogenesis from root explants in vitro. Inhibits RGLG3 and RGLG4 ubiquitination activity. The polypeptide is Two-on-two hemoglobin-3 (GLB3) (Arabidopsis thaliana (Mouse-ear cress)).